A 137-amino-acid polypeptide reads, in one-letter code: Protein cornichon homolog 4 (137 aa).

3 helical membrane passes run 8-28, 53-73, and 113-133; these read LISF…LVCL, FIVQ…FMTL, and LAYI…SALD.

The protein belongs to the cornichon family.

The protein localises to the membrane. This chain is Protein cornichon homolog 4, found in Arabidopsis thaliana (Mouse-ear cress).